A 102-amino-acid polypeptide reads, in one-letter code: ATP-dependent Clp protease adapter protein ClpS (102 aa).

This sequence belongs to the ClpS family. In terms of assembly, binds to the N-terminal domain of the chaperone ClpA.

Functionally, involved in the modulation of the specificity of the ClpAP-mediated ATP-dependent protein degradation. The sequence is that of ATP-dependent Clp protease adapter protein ClpS from Shewanella putrefaciens (strain CN-32 / ATCC BAA-453).